Consider the following 83-residue polypeptide: Exodeoxyribonuclease 7 small subunit (83 aa).

Belongs to the XseB family. As to quaternary structure, heterooligomer composed of large and small subunits.

The protein resides in the cytoplasm. It carries out the reaction Exonucleolytic cleavage in either 5'- to 3'- or 3'- to 5'-direction to yield nucleoside 5'-phosphates.. Functionally, bidirectionally degrades single-stranded DNA into large acid-insoluble oligonucleotides, which are then degraded further into small acid-soluble oligonucleotides. This chain is Exodeoxyribonuclease 7 small subunit, found in Rhodopseudomonas palustris (strain BisB5).